Here is a 448-residue protein sequence, read N- to C-terminus: Probable glycine dehydrogenase (decarboxylating) subunit 1 (448 aa).

It belongs to the GcvP family. N-terminal subunit subfamily. As to quaternary structure, the glycine cleavage system is composed of four proteins: P, T, L and H. In this organism, the P 'protein' is a heterodimer of two subunits.

The catalysed reaction is N(6)-[(R)-lipoyl]-L-lysyl-[glycine-cleavage complex H protein] + glycine + H(+) = N(6)-[(R)-S(8)-aminomethyldihydrolipoyl]-L-lysyl-[glycine-cleavage complex H protein] + CO2. Its function is as follows. The glycine cleavage system catalyzes the degradation of glycine. The P protein binds the alpha-amino group of glycine through its pyridoxal phosphate cofactor; CO(2) is released and the remaining methylamine moiety is then transferred to the lipoamide cofactor of the H protein. In Geobacillus kaustophilus (strain HTA426), this protein is Probable glycine dehydrogenase (decarboxylating) subunit 1.